A 165-amino-acid polypeptide reads, in one-letter code: MKLFGFRSRRGQTVLGSIDHLYTGSGYRIRYSELQKIHKAAVKGDAAEMERCLARRSGDLDALDKQHRTALHLACASGHVKVVTLLVNRKCQIDIYDKENRTPLIQAVHCQEEACAVILLEHGANPNLKDIYGNTALHYAVYSESTSLAEKLLFHGENIEALDKV.

ANK repeat units lie at residues 66–95 (QHRTALHLACASGHVKVVTLLVNRKCQIDI), 99–128 (ENRTPLIQAVHCQEEACAVILLEHGANPNL), and 132–161 (YGNTALHYAVYSESTSLAEKLLFHGENIEA).

The polypeptide is Putative ankyrin repeat domain-containing protein 20A5 (ANKRD20A5P) (Homo sapiens (Human)).